The sequence spans 264 residues: Cell cycle regulator CcrZ (264 aa).

The ATP site is built by Phe-32, Trp-70, and Gly-73. The Brenner's motif [HXDhX3N] motif lies at 157–164 (HGDVRHSN). The active-site Proton acceptor is Asp-159. The APH signature appears at 173 to 196 (IYLVDWDSVRLTDRMFDVAHMLCH).

It belongs to the aminoglycoside phosphotransferase family. As to quaternary structure, monomer in solution. Interacts with DnaA (via domains I (1-82) and III (111-326)). Interacts with DnaB. Interacts with FtsZ; the interaction is direct and ensures correct localization during the cell cycle.

The protein localises to the cytoplasm. It catalyses the reaction D-ribose + ATP = D-ribose 5-phosphate + ADP + H(+). It carries out the reaction 2-deoxy-D-ribose + ATP = 2-deoxy-D-ribose 5-phosphate + ADP + H(+). Its function is as follows. Plays a role in cell cycle regulation and chromosome integrity. Activates DnaA-dependent chromosomal DNA replication initiation ensuring that the chromosome is replicated at the right time during the cell cycle. May regulate replication initiation through phosphorylation of a possible second messenger or metabolite, and by interacting with replication initiation proteins. Has ATPase activity with D-ribose and 2-deoxy-D-ribose in vitro, but not with choline. Involved in DNA damage response. This chain is Cell cycle regulator CcrZ, found in Streptococcus pneumoniae serotype 2 (strain D39 / NCTC 7466).